We begin with the raw amino-acid sequence, 477 residues long: Bifunctional protein HldE (477 aa).

A ribokinase region spans residues 1–318 (MKVNLPAFER…ENAVRGRADT (318 aa)). 195 to 198 (NLSE) lines the ATP pocket. Asp-264 is an active-site residue. Residues 344–477 (MTNGVFDILH…IKKIQTESEK (134 aa)) are cytidylyltransferase.

The protein in the N-terminal section; belongs to the carbohydrate kinase PfkB family. In the C-terminal section; belongs to the cytidylyltransferase family. As to quaternary structure, homodimer.

It catalyses the reaction D-glycero-beta-D-manno-heptose 7-phosphate + ATP = D-glycero-beta-D-manno-heptose 1,7-bisphosphate + ADP + H(+). It carries out the reaction D-glycero-beta-D-manno-heptose 1-phosphate + ATP + H(+) = ADP-D-glycero-beta-D-manno-heptose + diphosphate. It participates in nucleotide-sugar biosynthesis; ADP-L-glycero-beta-D-manno-heptose biosynthesis; ADP-L-glycero-beta-D-manno-heptose from D-glycero-beta-D-manno-heptose 7-phosphate: step 1/4. The protein operates within nucleotide-sugar biosynthesis; ADP-L-glycero-beta-D-manno-heptose biosynthesis; ADP-L-glycero-beta-D-manno-heptose from D-glycero-beta-D-manno-heptose 7-phosphate: step 3/4. Functionally, catalyzes the phosphorylation of D-glycero-D-manno-heptose 7-phosphate at the C-1 position to selectively form D-glycero-beta-D-manno-heptose-1,7-bisphosphate. Catalyzes the ADP transfer from ATP to D-glycero-beta-D-manno-heptose 1-phosphate, yielding ADP-D-glycero-beta-D-manno-heptose. This is Bifunctional protein HldE from Salmonella agona (strain SL483).